The chain runs to 326 residues: GTP 3',8-cyclase (326 aa).

Residues 7–232 (GFGRSFPYLR…PRAADAGPAR (226 aa)) enclose the Radical SAM core domain. Arg-16 provides a ligand contact to GTP. [4Fe-4S] cluster-binding residues include Cys-23 and Cys-27. Tyr-29 is an S-adenosyl-L-methionine binding site. Residue Cys-30 participates in [4Fe-4S] cluster binding. Arg-65 contributes to the GTP binding site. Gly-69 serves as a coordination point for S-adenosyl-L-methionine. A GTP-binding site is contributed by Thr-96. Ser-120 contributes to the S-adenosyl-L-methionine binding site. Residue Lys-157 coordinates GTP. Position 191 (Met-191) interacts with S-adenosyl-L-methionine. Residues Cys-254 and Cys-257 each contribute to the [4Fe-4S] cluster site. 259 to 261 (RLR) provides a ligand contact to GTP. Cys-271 is a binding site for [4Fe-4S] cluster.

The protein belongs to the radical SAM superfamily. MoaA family. As to quaternary structure, monomer and homodimer. [4Fe-4S] cluster is required as a cofactor.

It carries out the reaction GTP + AH2 + S-adenosyl-L-methionine = (8S)-3',8-cyclo-7,8-dihydroguanosine 5'-triphosphate + 5'-deoxyadenosine + L-methionine + A + H(+). Its pathway is cofactor biosynthesis; molybdopterin biosynthesis. In terms of biological role, catalyzes the cyclization of GTP to (8S)-3',8-cyclo-7,8-dihydroguanosine 5'-triphosphate. The polypeptide is GTP 3',8-cyclase (Stenotrophomonas maltophilia (strain R551-3)).